A 471-amino-acid polypeptide reads, in one-letter code: V-type ATP synthase beta chain (471 aa).

The protein belongs to the ATPase alpha/beta chains family.

Produces ATP from ADP in the presence of a proton gradient across the membrane. The V-type beta chain is a regulatory subunit. The sequence is that of V-type ATP synthase beta chain from Deinococcus deserti (strain DSM 17065 / CIP 109153 / LMG 22923 / VCD115).